The following is a 107-amino-acid chain: Pro-corazonin (107 aa).

Residues 1 to 21 (MVNSQILILFILSLTITIVMC) form the signal peptide. Gln-22 is modified (pyrrolidone carboxylic acid). Position 32 is an asparagine amide (Asn-32). Residues 88–107 (SFSENMINDHRQPAPTNNNY) constitute a propeptide that is removed on maturation.

This sequence belongs to the corazonin family. In terms of tissue distribution, in the adult brain, expressed in four neurons of the lateral protocerebrum project axons towards the retrocerebral complex.

Its subcellular location is the secreted. Functionally, cardioactive peptide. Corazonin is probably involved in the physiological regulation of the heart beat. In Apis mellifera (Honeybee), this protein is Pro-corazonin.